A 412-amino-acid chain; its full sequence is 43 kDa receptor-associated protein of the synapse (412 aa).

A lipid anchor (N-myristoyl glycine) is attached at Gly-2. TPR repeat units follow at residues 6-39, 83-116, 123-156, 163-196, 206-239, 246-279, and 286-319; these read TKQQ…SSDL, LESY…PGTR, GQVS…AHNN, CRVC…VNNY, AMSQ…ALQH, ALCL…MTEI, and VQAL…AEEV. At Tyr-196 the chain carries Phosphotyrosine. The RING-type zinc finger occupies 363-403; sequence CGLCGESIGEKNSRLQALPCSHIFHLRCLQNNGTRSCPNCR. Ser-405 carries the post-translational modification Phosphoserine.

This sequence belongs to the RAPsyn family. In terms of processing, ubiquitinated by the BCR(KLHL8) complex, leading to its degradation.

Its subcellular location is the cell membrane. The protein localises to the postsynaptic cell membrane. It is found in the cytoplasm. The protein resides in the cytoskeleton. Functionally, postsynaptic protein required for clustering of nicotinic acetylcholine receptors (nAChRs) at the neuromuscular junction. It may link the receptor to the underlying postsynaptic cytoskeleton, possibly by direct association with actin or spectrin. This chain is 43 kDa receptor-associated protein of the synapse (RAPSN), found in Homo sapiens (Human).